Here is a 196-residue protein sequence, read N- to C-terminus: Pyridoxal 5'-phosphate synthase subunit PdxT (196 aa).

Gly47–Ser49 contacts L-glutamine. Catalysis depends on Cys79, which acts as the Nucleophile. L-glutamine-binding positions include Arg106 and Ile134–Arg135. Residues His170 and Glu172 each act as charge relay system in the active site.

Belongs to the glutaminase PdxT/SNO family. In the presence of PdxS, forms a dodecamer of heterodimers. Only shows activity in the heterodimer.

It catalyses the reaction aldehydo-D-ribose 5-phosphate + D-glyceraldehyde 3-phosphate + L-glutamine = pyridoxal 5'-phosphate + L-glutamate + phosphate + 3 H2O + H(+). It carries out the reaction L-glutamine + H2O = L-glutamate + NH4(+). Its pathway is cofactor biosynthesis; pyridoxal 5'-phosphate biosynthesis. Catalyzes the hydrolysis of glutamine to glutamate and ammonia as part of the biosynthesis of pyridoxal 5'-phosphate. The resulting ammonia molecule is channeled to the active site of PdxS. The chain is Pyridoxal 5'-phosphate synthase subunit PdxT from Bacillus anthracis (strain A0248).